The following is a 703-amino-acid chain: Stonustoxin subunit alpha (703 aa).

The tract at residues 2–265 (SSDLVMPALG…KAQQLIQEIN (264 aa)) is structural MACPF/CDC pore-forming domain. The segment at 266-385 (VSKVRRIHTT…GMVEGTQAKF (120 aa)) is structural FAT domain. Residues 386 to 517 (VSNQTELDRE…PRMPFVQGYK (132 aa)) form a thioredoxin (THX) domain region. Positions 508-703 (PRMPFVQGYK…AGNHGTLRLL (196 aa)) constitute a B30.2/SPRY domain.

Belongs to the SNTX/VTX toxin family. In terms of assembly, heterodimer of alpha and beta subunits; non-covalently linked. Intrachain disulfide bonds may be present in the heterodimer. Post-translationally, not glycosylated. As to expression, expressed by the venom gland.

It is found in the secreted. This lethal (towards mammals) heterodimer induces hemolytic activities due to its ability to form pores in the cell membrane. The pore may be composed of 10 SNTX-alpha/beta heterodimers. The toxin elicits potent hypotension which is endothelium-dependent and appears to be mediated by the nitric oxide pathway and activation of potassium channels. In addition, it displays edema-inducing activities, increases vascular permeability. It also shows myotoxic activities and interferes irreversibly with neuromuscular function. It also induces irreversible platelet aggregation in rabbit or rat (but not in human or mouse) whole blood. In addition, it has been observed to increase spontaneous quantal acetylcholine release from isolated frog cutaneous pectoris motor endings. The polypeptide is Stonustoxin subunit alpha (Synanceia horrida (Estuarine stonefish)).